Consider the following 328-residue polypeptide: Nucleotide-binding protein Blon_1085/BLIJ_1109 (328 aa).

The segment at 1-33 (MSQQTTIRDTGEAAATNAPANSATSTSTPDNQP) is disordered. Over residues 13–29 (AAATNAPANSATSTSTP) the composition is skewed to low complexity. Residue 46–53 (GMSGAGRS) participates in ATP binding. 101–104 (DVRS) is a GTP binding site.

This sequence belongs to the RapZ-like family.

Its function is as follows. Displays ATPase and GTPase activities. The sequence is that of Nucleotide-binding protein Blon_1085/BLIJ_1109 from Bifidobacterium longum subsp. infantis (strain ATCC 15697 / DSM 20088 / JCM 1222 / NCTC 11817 / S12).